A 391-amino-acid chain; its full sequence is UPF0328 protein ECU06_1650 (391 aa).

The protein belongs to the UPF0328 family.

This Encephalitozoon cuniculi (strain GB-M1) (Microsporidian parasite) protein is UPF0328 protein ECU06_1650.